Consider the following 239-residue polypeptide: Lipid transferase CIDEC (239 aa).

A required for liquid-liquid phase separation (LLPS) region spans residues 1 to 35 (MDYAMKSLSLLYPRSLSRHVAVSTAVVTQQLVSKP). Residues 41–118 (RARPCRVSTA…VLLKGQKWKP (78 aa)) form the CIDE-N domain. Residues 123–126 (RKKR) carry the RKKR polybasic motif motif.

The protein belongs to the CIDE family. In terms of assembly, homodimer. Homooligomer; undergoes liquid-liquid phase separation (LLPS) via its N-terminus, facilitating lipid droplet fusion, occurs at the lipid droplet contact sites. Interacts with CIDEA. Interacts with PLIN1. Interacts with NFAT5; this interaction is direct and retains NFAT5 in the cytoplasm. Interacts with CEBPB. Interacts with isoform CLSTN3beta of CLSTN3; inhibiting the lipid transferase activity of CIDEC. Post-translationally, ubiquitinated and targeted to proteasomal degradation, resulting in a short half-life (about 15 minutes in 3T3-L1 cells). Protein stability depends on triaclyglycerol synthesis, fatty acid availability and lipid droplet formation. In terms of tissue distribution, expressed almost exclusively in adipose tissue, including subcutaneous and epididymal white adipose tissue (at protein level). Although abundantly present in brown adipose tissue at the mRNA level, the protein is almost undetectable in this tissue, or at moderate levels. Expressed in the mammary gland, in stromal adipose tissue, but becomes undetectable at the end of pregnancy and during lactation (at protein level). Expressed at low levels in skeletal muscle and heart.

It localises to the lipid droplet. The protein resides in the endoplasmic reticulum. The protein localises to the nucleus. It carries out the reaction a triacyl-sn-glycerol(in) = a triacyl-sn-glycerol(out). Lipid transferase specifically expressed in white adipose tissue, which promotes unilocular lipid droplet formation by mediating lipid droplet fusion. Lipid droplet fusion promotes their enlargement, restricting lipolysis and favoring lipid storage. Localizes on the lipid droplet surface, at focal contact sites between lipid droplets, and mediates atypical lipid droplet fusion by undergoing liquid-liquid phase separation (LLPS) and promoting directional net neutral lipid transfer from the smaller to larger lipid droplets. The transfer direction may be driven by the internal pressure difference between the contacting lipid droplet pair. Its role in neutral lipid transfer and lipid droplet enlargement is activated by the interaction with PLIN1. May also act as a CEBPB coactivator in the white adipose tissue to control the expression of a subset of CEBPB downstream target genes, including SOCS1, SOCS3, TGFB1, TGFBR1, ID2 and XDH. When overexpressed in preadipocytes, induces apoptosis or increases cell susceptibility to apoptosis induced by serum deprivation or TGFB treatment. The polypeptide is Lipid transferase CIDEC (Mus musculus (Mouse)).